The following is a 159-amino-acid chain: Lipoprotein signal peptidase (159 aa).

Helical transmembrane passes span 59–79 (PMIL…YVVF) and 87–107 (FLIT…DRIL). Residues D113 and D139 contribute to the active site. Residues 131-151 (LWPVFNIADSAITIGACVLVI) traverse the membrane as a helical segment.

The protein belongs to the peptidase A8 family.

The protein localises to the cell inner membrane. It catalyses the reaction Release of signal peptides from bacterial membrane prolipoproteins. Hydrolyzes -Xaa-Yaa-Zaa-|-(S,diacylglyceryl)Cys-, in which Xaa is hydrophobic (preferably Leu), and Yaa (Ala or Ser) and Zaa (Gly or Ala) have small, neutral side chains.. Its pathway is protein modification; lipoprotein biosynthesis (signal peptide cleavage). Functionally, this protein specifically catalyzes the removal of signal peptides from prolipoproteins. The protein is Lipoprotein signal peptidase of Chlorobium phaeobacteroides (strain BS1).